Here is a 470-residue protein sequence, read N- to C-terminus: Protein naked cuticle homolog 1 (470 aa).

Disordered stretches follow at residues 1–21 (MGKLHSKPAAVCKRRESPEGD) and 90–114 (PPEKTDGLGSGDEKKMERVSEPCPG). Gly-2 carries N-myristoyl glycine lipidation. A compositionally biased stretch (basic and acidic residues) spans 92 to 109 (EKTDGLGSGDEKKMERVS). The interval 125 to 190 (QCDVSMEEDS…LRVKLTVAPD (66 aa)) is interaction with DVL1, DVL2 and DVL3. The EF-hand domain maps to 131–166 (EEDSRQEWTFTLYDFDNNGKVTREDITSLLHTIYEV). Ca(2+) is bound by residues Asp-144, Asp-146, Asn-148, Lys-150, and Asp-155. The span at 192-205 (SQSKRSVLVNQADL) shows a compositional bias: polar residues. Disordered regions lie at residues 192 to 228 (SQSKRSVLVNQADLQSARPRAETKPTEDLRSWEKKQR), 271 to 314 (QFGP…QGVD), 337 to 357 (GTQDGSKHFVRSPKAQGKSVG), and 446 to 470 (GQPVQRHEHHHHHEHHHHYHHFYQT). Positions 210-227 (PRAETKPTEDLRSWEKKQ) are enriched in basic and acidic residues. The segment covering 271-281 (QFGPGSPSVAQ) has biased composition (polar residues). A compositionally biased stretch (basic residues) spans 452–470 (HEHHHHHEHHHHYHHFYQT).

The protein belongs to the NKD family. As to quaternary structure, interacts with DVL1, DVL2, DVL3 and PPP2R3A. Expressed in colon, heart, kidney, leukocyte, liver, lung, ovary, pancreas, placenta, prostate, skeletal muscle, small intestine and spleen.

It localises to the cell membrane. The protein resides in the cytoplasm. In terms of biological role, cell autonomous antagonist of the canonical Wnt signaling pathway. May activate a second Wnt signaling pathway that controls planar cell polarity. The protein is Protein naked cuticle homolog 1 (NKD1) of Homo sapiens (Human).